The following is a 134-amino-acid chain: Acyl carrier protein, chloroplastic (134 aa).

Residues methionine 1–cysteine 51 constitute a chloroplast transit peptide. One can recognise a Carrier domain in the interval proline 55–valine 130. Serine 90 carries the post-translational modification O-(pantetheine 4'-phosphoryl)serine.

This sequence belongs to the acyl carrier protein (ACP) family. In terms of processing, 4'-phosphopantetheine is transferred from CoA to a specific serine of apo-ACP by acpS. This modification is essential for activity because fatty acids are bound in thioester linkage to the sulfhydryl of the prosthetic group. As to expression, seed.

The protein resides in the plastid. Its subcellular location is the chloroplast. It participates in lipid metabolism; fatty acid biosynthesis. Functionally, carrier of the growing fatty acid chain in fatty acid biosynthesis. The sequence is that of Acyl carrier protein, chloroplastic (ACL1.A3) from Brassica napus (Rape).